Consider the following 343-residue polypeptide: 4-hydroxy-2-oxovalerate aldolase 1 (343 aa).

Residues 8 to 260 (ITVHDMSLRD…ETGVDVFAIS (253 aa)) enclose the Pyruvate carboxyltransferase domain. 16–17 (RD) contacts substrate. Residue Asp-17 participates in Mn(2+) binding. His-20 acts as the Proton acceptor in catalysis. Ser-170 and His-199 together coordinate substrate. The Mn(2+) site is built by His-199 and His-201. Residue Tyr-290 participates in substrate binding.

This sequence belongs to the 4-hydroxy-2-oxovalerate aldolase family.

It catalyses the reaction (S)-4-hydroxy-2-oxopentanoate = acetaldehyde + pyruvate. The chain is 4-hydroxy-2-oxovalerate aldolase 1 (bphI) from Burkholderia cenocepacia (strain ATCC BAA-245 / DSM 16553 / LMG 16656 / NCTC 13227 / J2315 / CF5610) (Burkholderia cepacia (strain J2315)).